The chain runs to 300 residues: Cation-efflux pump FieF (300 aa).

4 consecutive transmembrane segments (helical) span residues 12–32 (AAIA…FAWW), 39–59 (ILAA…NLLV), 82–102 (AALA…LTGI), and 114–134 (PGVG…LVSF). Residues D45 and D49 each coordinate Zn(2+). Residues H153 and D157 each contribute to the Zn(2+) site. 2 consecutive transmembrane segments (helical) span residues 156–176 (SDVM…YGWH) and 178–198 (ADAL…LRMG).

It belongs to the cation diffusion facilitator (CDF) transporter (TC 2.A.4) family. FieF subfamily. Homodimer.

It is found in the cell inner membrane. It carries out the reaction Zn(2+)(in) + H(+)(out) = Zn(2+)(out) + H(+)(in). It catalyses the reaction Cd(2+)(in) + H(+)(out) = Cd(2+)(out) + H(+)(in). The enzyme catalyses Fe(2+)(in) + H(+)(out) = Fe(2+)(out) + H(+)(in). Divalent metal cation transporter which exports Zn(2+), Cd(2+) and possibly Fe(2+). May be involved in zinc and iron detoxification by efflux. This chain is Cation-efflux pump FieF, found in Escherichia coli O127:H6 (strain E2348/69 / EPEC).